The sequence spans 373 residues: Cytoplasmic tRNA 2-thiolation protein 1 (373 aa).

Belongs to the TtcA family. CTU1/NCS6/ATPBD3 subfamily.

The protein localises to the cytoplasm. Its pathway is tRNA modification; 5-methoxycarbonylmethyl-2-thiouridine-tRNA biosynthesis. Functionally, plays a central role in 2-thiolation of mcm(5)S(2)U at tRNA wobble positions of tRNA(Lys), tRNA(Glu) and tRNA(Gln). Directly binds tRNAs and probably acts by catalyzing adenylation of tRNAs, an intermediate required for 2-thiolation. It is unclear whether it acts as a sulfurtransferase that transfers sulfur from thiocarboxylated URM1 onto the uridine of tRNAs at wobble position. Prior mcm(5) tRNA modification by the elongator complex is required for 2-thiolation. May also be involved in protein urmylation. The sequence is that of Cytoplasmic tRNA 2-thiolation protein 1 from Eremothecium gossypii (strain ATCC 10895 / CBS 109.51 / FGSC 9923 / NRRL Y-1056) (Yeast).